The sequence spans 2197 residues: Non-reducing polyketide synthase Preu6 (2197 aa).

Positions 14–253 (FFCPQSRAPP…HNPENAELAK (240 aa)) are N-terminal acylcarrier protein transacylase domain (SAT). A Ketosynthase family 3 (KS3) domain is found at 375–797 (DDAIAITGAS…GSNAAVICVE (423 aa)). Catalysis depends on for beta-ketoacyl synthase activity residues Cys546, His681, and His720. The interval 901–1198 (LVFSGQNTNA…SKPDSQVFQS (298 aa)) is malonyl-CoA:ACP transacylase (MAT) domain. The For acyl/malonyl transferase activity role is filled by Ser988. The disordered stretch occupies residues 1258–1282 (ATEASQASTTSDTIQSTPTQTVQSP). The span at 1260–1281 (EASQASTTSDTIQSTPTQTVQS) shows a compositional bias: polar residues. An N-terminal hotdog fold region spans residues 1276–1403 (TQTVQSPPKL…GRVILTESSV (128 aa)). A PKS/mFAS DH domain is found at 1276–1576 (TQTVQSPPKL…FNKMEISKLA (301 aa)). A product template (PT) domain region spans residues 1284–1575 (KLISRLASLQ…RFNKMEISKL (292 aa)). The active-site Proton acceptor; for dehydratase activity is the His1310. The interval 1424–1576 (AEKLMSSRAY…FNKMEISKLA (153 aa)) is C-terminal hotdog fold. The Proton donor; for dehydratase activity role is filled by Asp1487. The segment covering 1581-1591 (SVNASSPTGGR) has biased composition (polar residues). A disordered region spans residues 1581-1614 (SVNASSPTGGRTQPPAAPKTQAQPMASRPSPTPL). Carrier domains lie at 1639–1719 (NDIG…SQKM) and 1748–1824 (NSIT…ATPP). O-(pantetheine 4'-phosphoryl)serine is present on residues Ser1673 and Ser1782. Residues 1817–1841 (LGASATPPSTTGSSTPGDISTAATT) form a disordered region. A compositionally biased stretch (low complexity) spans 1818-1833 (GASATPPSTTGSSTPG). A thioesterase (TE) domain region spans residues 1870–2197 (DSYQVKTVEY…PGLDFLIQNA (328 aa)). Catalysis depends on for thioesterase activity residues Ser1990 and Asp2137.

Requires pantetheine 4'-phosphate as cofactor.

The catalysed reaction is 6 malonyl-CoA + 2 acetyl-CoA + 5 H(+) = o-orsellinate depside + 6 CO2 + 8 CoA + H2O. Functionally, non-reducing polyketide synthase; part of a gene cluster that mediates the biosynthesis of a yet unidentified natural product. The first step in the pathway is performed by Preu6 that condenses 2 acetyl-CoA starter units with 6 malonyl-CoA units to produce lecanoric acid (LA), also known as orsellinate depside, an intermediate that has significant antifungal activity against the plant pathogen Botryosphaeria berengeriana. The biosynthesis probably occurs via the formation of 2 orsellinate intermediates fused together by the C-terminal thioesterase (TE) domain that finally releases lecanoric acid. In Preussia isomera (Coprophilous fungus), this protein is Non-reducing polyketide synthase Preu6.